A 524-amino-acid polypeptide reads, in one-letter code: RNA-binding protein 39 (524 aa).

Residues 1–146 (MADDIDIEAM…PVREPIDNLT (146 aa)) are disordered. Position 2 is an N-acetylalanine (Ala-2). The segment covering 14 to 32 (PYKKDENKLSSANGHEERS) has biased composition (basic and acidic residues). Basic residues-rich tracts occupy residues 33 to 56 (KKRKKSKSRSRSHERKRSKSKERK) and 64 to 95 (KKSKSRERKRSRSKERRRSRSRSRDRRFRGRY). Tyr-95 carries the phosphotyrosine modification. A phosphoserine mark is found at Ser-97 and Ser-100. Lys-111 participates in a covalent cross-link: Glycyl lysine isopeptide (Lys-Gly) (interchain with G-Cter in SUMO2). Ser-117 carries the post-translational modification Phosphoserine. Residue Lys-119 forms a Glycyl lysine isopeptide (Lys-Gly) (interchain with G-Cter in SUMO2) linkage. Over residues 119-130 (KLSRRRSRSKSP) the composition is skewed to basic residues. Phosphoserine occurs at positions 121 and 136. The segment covering 131–146 (FRKDKSPVREPIDNLT) has biased composition (basic and acidic residues). Thr-146 carries the post-translational modification Phosphothreonine. An RRM 1 domain is found at 153–230 (RTVFCMQLAA…VPIIVQASQA (78 aa)). Residue Lys-244 forms a Glycyl lysine isopeptide (Lys-Gly) (interchain with G-Cter in SUMO2) linkage. The region spanning 250-328 (MRLYVGSLHF…RPMKVGHVTE (79 aa)) is the RRM 2 domain. Residues 291–355 (KGYGFITFSD…RTGIDLGTTG (65 aa)) are activating domain. The tract at residues 291-400 (KGYGFITFSD…ADLQTRLSQQ (110 aa)) is interaction with JUN. Residues Ser-334, Ser-337, and Ser-341 each carry the phosphoserine modification. Positions 355–400 (GRLQLMARLAEGTGLQIPPAAQQALQMSGSLAFGAVADLQTRLSQQ) are interaction with ESR1 and ESR2. An interaction with NCOA6 region spans residues 400-524 (QTEASALAAA…ATQLLVPSRR (125 aa)). The region spanning 439–502 (EIKDDVIEEC…KMITAAYVPL (64 aa)) is the RRM 3 domain.

This sequence belongs to the splicing factor SR family. As to quaternary structure, interacts with NCOA6 and JUN. Interacts with ESR1 and ESR2, in the presence of estradiol (E2). Interacts with RSRC1 (via Arg/Ser-rich domain). Interacts with SF3B1. Interacts with ZNF106 (via N-terminus).

The protein localises to the nucleus speckle. Functionally, RNA-binding protein that acts as a pre-mRNA splicing factor. Acts by promoting exon inclusion via regulation of exon cassette splicing. Also acts as a transcriptional coactivator for steroid nuclear receptors ESR1/ER-alpha and ESR2/ER-beta, and JUN/AP-1, independently of the pre-mRNA splicing factor activity. The sequence is that of RNA-binding protein 39 (RBM39) from Pongo abelii (Sumatran orangutan).